A 642-amino-acid chain; its full sequence is Threonine--tRNA ligase (642 aa).

One can recognise a TGS domain in the interval 1-61 (MPVITLPDGS…ENDAQLSIIT (61 aa)). The segment at 243-534 (DHRKIGKQLD…LTEEFAGFFP (292 aa)) is catalytic. Position 286 is an N6-acetyllysine (K286). Zn(2+)-binding residues include C334, H385, and H511.

Belongs to the class-II aminoacyl-tRNA synthetase family. As to quaternary structure, homodimer. Zn(2+) is required as a cofactor.

The protein localises to the cytoplasm. The enzyme catalyses tRNA(Thr) + L-threonine + ATP = L-threonyl-tRNA(Thr) + AMP + diphosphate + H(+). In terms of biological role, catalyzes the attachment of threonine to tRNA(Thr) in a two-step reaction: L-threonine is first activated by ATP to form Thr-AMP and then transferred to the acceptor end of tRNA(Thr). Also edits incorrectly charged L-seryl-tRNA(Thr). The polypeptide is Threonine--tRNA ligase (Escherichia coli O8 (strain IAI1)).